Here is a 546-residue protein sequence, read N- to C-terminus: Chaperonin GroEL (546 aa).

ATP contacts are provided by residues 29–32 (TLGP), Lys-50, 86–90 (DGTTT), Gly-414, 478–480 (NAA), and Asp-494.

It belongs to the chaperonin (HSP60) family. Forms a cylinder of 14 subunits composed of two heptameric rings stacked back-to-back. Interacts with the co-chaperonin GroES.

It localises to the cytoplasm. The catalysed reaction is ATP + H2O + a folded polypeptide = ADP + phosphate + an unfolded polypeptide.. Functionally, together with its co-chaperonin GroES, plays an essential role in assisting protein folding. The GroEL-GroES system forms a nano-cage that allows encapsulation of the non-native substrate proteins and provides a physical environment optimized to promote and accelerate protein folding. The polypeptide is Chaperonin GroEL (Psychrobacter arcticus (strain DSM 17307 / VKM B-2377 / 273-4)).